A 420-amino-acid polypeptide reads, in one-letter code: Gamma-glutamyl phosphate reductase (420 aa).

Belongs to the gamma-glutamyl phosphate reductase family.

It is found in the cytoplasm. The enzyme catalyses L-glutamate 5-semialdehyde + phosphate + NADP(+) = L-glutamyl 5-phosphate + NADPH + H(+). It functions in the pathway amino-acid biosynthesis; L-proline biosynthesis; L-glutamate 5-semialdehyde from L-glutamate: step 2/2. Functionally, catalyzes the NADPH-dependent reduction of L-glutamate 5-phosphate into L-glutamate 5-semialdehyde and phosphate. The product spontaneously undergoes cyclization to form 1-pyrroline-5-carboxylate. This is Gamma-glutamyl phosphate reductase from Streptococcus gordonii (strain Challis / ATCC 35105 / BCRC 15272 / CH1 / DL1 / V288).